We begin with the raw amino-acid sequence, 308 residues long: Ornithine carbamoyltransferase (308 aa).

Carbamoyl phosphate is bound by residues 56-59 (STRT), Gln83, Arg107, and 134-137 (HPCQ). Residues Asn165, Asp225, and 229 to 230 (SM) each bind L-ornithine. Carbamoyl phosphate-binding positions include 264-265 (CL) and Arg292.

The protein belongs to the aspartate/ornithine carbamoyltransferase superfamily. OTCase family.

The protein localises to the cytoplasm. It carries out the reaction carbamoyl phosphate + L-ornithine = L-citrulline + phosphate + H(+). The protein operates within amino-acid biosynthesis; L-arginine biosynthesis; L-arginine from L-ornithine and carbamoyl phosphate: step 1/3. Its function is as follows. Reversibly catalyzes the transfer of the carbamoyl group from carbamoyl phosphate (CP) to the N(epsilon) atom of ornithine (ORN) to produce L-citrulline. The protein is Ornithine carbamoyltransferase of Nitrobacter winogradskyi (strain ATCC 25391 / DSM 10237 / CIP 104748 / NCIMB 11846 / Nb-255).